A 353-amino-acid chain; its full sequence is 2,4-diaminopentanoate dehydrogenase (353 aa).

Belongs to the DapB family. In terms of assembly, homodimer.

It carries out the reaction (2R,4S)-2,4-diaminopentanoate + NAD(+) + H2O = (2R)-2-amino-4-oxopentanoate + NH4(+) + NADH + H(+). It catalyses the reaction (2R,4S)-2,4-diaminopentanoate + NADP(+) + H2O = (2R)-2-amino-4-oxopentanoate + NH4(+) + NADPH + H(+). With respect to regulation, inhibited by p-chloromercuribenzoate, iodoacetate and N-ethylmaleimide. Its function is as follows. Involved in the ornithine fermentation pathway. Catalyzes the oxidative deamination of (2R,4S)-2,4-diaminopentanoate (DAP) to yield 2-amino-4-ketopentanoate (AKP). This is 2,4-diaminopentanoate dehydrogenase from Acetoanaerobium sticklandii (strain ATCC 12662 / DSM 519 / JCM 1433 / CCUG 9281 / NCIMB 10654 / HF) (Clostridium sticklandii).